Consider the following 649-residue polypeptide: Macrolide export ATP-binding/permease protein MacB (649 aa).

One can recognise an ABC transporter domain in the interval 7-245 (IELKNIVRRY…SSAQEVTPQL (239 aa)). Position 43–50 (43–50 (GASGSGKS)) interacts with ATP. A run of 4 helical transmembrane segments spans residues 276–296 (LLTM…IALG), 529–549 (IAFI…LVSV), 582–602 (LLGG…FSAF), and 612–632 (FSSF…FGYF).

The protein belongs to the ABC transporter superfamily. Macrolide exporter (TC 3.A.1.122) family. As to quaternary structure, homodimer. Part of the tripartite efflux system MacAB-TolC, which is composed of an inner membrane transporter, MacB, a periplasmic membrane fusion protein, MacA, and an outer membrane component, TolC. The complex forms a large protein conduit and can translocate molecules across both the inner and outer membranes. Interacts with MacA.

The protein localises to the cell inner membrane. Part of the tripartite efflux system MacAB-TolC. MacB is a non-canonical ABC transporter that contains transmembrane domains (TMD), which form a pore in the inner membrane, and an ATP-binding domain (NBD), which is responsible for energy generation. Confers resistance against macrolides. The chain is Macrolide export ATP-binding/permease protein MacB from Pasteurella multocida (strain Pm70).